We begin with the raw amino-acid sequence, 124 residues long: Small ribosomal subunit protein uS12 (124 aa).

3-methylthioaspartic acid is present on Asp-89.

The protein belongs to the universal ribosomal protein uS12 family. Part of the 30S ribosomal subunit. Contacts proteins S8 and S17. May interact with IF1 in the 30S initiation complex.

With S4 and S5 plays an important role in translational accuracy. Functionally, interacts with and stabilizes bases of the 16S rRNA that are involved in tRNA selection in the A site and with the mRNA backbone. Located at the interface of the 30S and 50S subunits, it traverses the body of the 30S subunit contacting proteins on the other side and probably holding the rRNA structure together. The combined cluster of proteins S8, S12 and S17 appears to hold together the shoulder and platform of the 30S subunit. The sequence is that of Small ribosomal subunit protein uS12 from Pectobacterium atrosepticum (strain SCRI 1043 / ATCC BAA-672) (Erwinia carotovora subsp. atroseptica).